A 525-amino-acid chain; its full sequence is GMP synthase [glutamine-hydrolyzing] (525 aa).

The Glutamine amidotransferase type-1 domain maps to 9 to 207 (RILILDFGSQ…VRDICQCEAL (199 aa)). The Nucleophile role is filled by cysteine 86. Active-site residues include histidine 181 and glutamate 183. A GMPS ATP-PPase domain is found at 208-400 (WTPAKIIDDA…LGLPYDMLYR (193 aa)). Residue 235-241 (SGGVDSS) coordinates ATP.

In terms of assembly, homodimer.

The enzyme catalyses XMP + L-glutamine + ATP + H2O = GMP + L-glutamate + AMP + diphosphate + 2 H(+). It functions in the pathway purine metabolism; GMP biosynthesis; GMP from XMP (L-Gln route): step 1/1. In terms of biological role, catalyzes the synthesis of GMP from XMP. The protein is GMP synthase [glutamine-hydrolyzing] of Salmonella schwarzengrund (strain CVM19633).